We begin with the raw amino-acid sequence, 202 residues long: NAD(P)H-quinone oxidoreductase subunit I (202 aa).

4Fe-4S ferredoxin-type domains are found at residues 55 to 84 (GRIH…VDWV) and 95 to 124 (KNYS…MTEE). [4Fe-4S] cluster contacts are provided by cysteine 64, cysteine 67, cysteine 70, cysteine 74, cysteine 104, cysteine 107, cysteine 110, and cysteine 114. Basic and acidic residues predominate over residues 168 to 187 (EYDPHVVPSDRPRAGQRPEE). Residues 168 to 202 (EYDPHVVPSDRPRAGQRPEELVDQYKQAAAANEEN) form a disordered region.

This sequence belongs to the complex I 23 kDa subunit family. In terms of assembly, NDH-1 is composed of at least 11 different subunits. The cofactor is [4Fe-4S] cluster.

The protein resides in the cellular thylakoid membrane. It catalyses the reaction a plastoquinone + NADH + (n+1) H(+)(in) = a plastoquinol + NAD(+) + n H(+)(out). It carries out the reaction a plastoquinone + NADPH + (n+1) H(+)(in) = a plastoquinol + NADP(+) + n H(+)(out). Functionally, NDH-1 shuttles electrons from an unknown electron donor, via FMN and iron-sulfur (Fe-S) centers, to quinones in the respiratory and/or the photosynthetic chain. The immediate electron acceptor for the enzyme in this species is believed to be plastoquinone. Couples the redox reaction to proton translocation, and thus conserves the redox energy in a proton gradient. This is NAD(P)H-quinone oxidoreductase subunit I from Synechococcus elongatus (strain ATCC 33912 / PCC 7942 / FACHB-805) (Anacystis nidulans R2).